The following is a 348-amino-acid chain: Eukaryotic translation initiation factor 3 subunit F (348 aa).

The MPN domain occupies 30-166; it reads VVIQPQAIFS…TRTYISAPVG (137 aa). Residues 312-327 show a composition bias toward gly residues; it reads STAIGGTGAESGGQRG. The tract at residues 312–348 is disordered; that stretch reads STAIGGTGAESGGQRGGQRNNRQRGGQQRNQAEELRA. A compositionally biased stretch (low complexity) spans 328–341; that stretch reads GQRNNRQRGGQQRN.

It belongs to the eIF-3 subunit F family. In terms of assembly, component of the eukaryotic translation initiation factor 3 (eIF-3) complex.

It localises to the cytoplasm. In terms of biological role, component of the eukaryotic translation initiation factor 3 (eIF-3) complex, which is involved in protein synthesis of a specialized repertoire of mRNAs and, together with other initiation factors, stimulates binding of mRNA and methionyl-tRNAi to the 40S ribosome. The eIF-3 complex specifically targets and initiates translation of a subset of mRNAs involved in cell proliferation. The polypeptide is Eukaryotic translation initiation factor 3 subunit F (Coccidioides immitis (strain RS) (Valley fever fungus)).